The primary structure comprises 218 residues: Adapter protein MecA (218 aa).

The protein belongs to the MecA family. Homodimer.

In terms of biological role, enables the recognition and targeting of unfolded and aggregated proteins to the ClpC protease or to other proteins involved in proteolysis. This is Adapter protein MecA from Exiguobacterium sp. (strain ATCC BAA-1283 / AT1b).